An 86-amino-acid chain; its full sequence is Putative defensin-like protein 189 (86 aa).

Positions 1–28 (MKMAKSANEIGFITCLVVFLVLTGQSNG) are cleaved as a signal peptide. Cystine bridges form between Cys39–Cys85, Cys52–Cys71, Cys57–Cys80, and Cys61–Cys82.

This sequence belongs to the DEFL family.

The protein resides in the secreted. The polypeptide is Putative defensin-like protein 189 (Arabidopsis thaliana (Mouse-ear cress)).